A 29-amino-acid chain; its full sequence is MKIKFVFDLLTPDDILHPSNHVNLIIRPI.

It belongs to the coronaviruses ns4.9 protein family.

The sequence is that of Truncated non-structural protein of 4.9 kDa from Bovine coronavirus (strain 98TXSF-110-LUN) (BCoV-LUN).